The following is a 604-amino-acid chain: UvrABC system protein C (604 aa).

One can recognise a GIY-YIG domain in the interval 17-95; that stretch reads SQPGVYRMLN…IKSLAPRYNI (79 aa). Residues 204–239 form the UVR domain; that stretch reads DEVLKTIEQKMFEASDRQAYEQAVLFRDQMQALRMI.

The protein belongs to the UvrC family. As to quaternary structure, interacts with UvrB in an incision complex.

Its subcellular location is the cytoplasm. Functionally, the UvrABC repair system catalyzes the recognition and processing of DNA lesions. UvrC both incises the 5' and 3' sides of the lesion. The N-terminal half is responsible for the 3' incision and the C-terminal half is responsible for the 5' incision. The chain is UvrABC system protein C from Nitrosomonas eutropha (strain DSM 101675 / C91 / Nm57).